A 186-amino-acid chain; its full sequence is HTH-type transcriptional regulator Hpr (186 aa).

The HTH marR-type domain maps to 13 to 157 (AMLYSQRIAQ…VMAVIRNIYG (145 aa)). Residues 63–86 (ISDVAKFGVMHVSTAFNFSKKLEE) constitute a DNA-binding region (H-T-H motif).

As to quaternary structure, homodimer.

Negative regulator of protease production and sporulation. This Lysinibacillus sphaericus (strain C3-41) protein is HTH-type transcriptional regulator Hpr.